The primary structure comprises 490 residues: Probable cytosol aminopeptidase (490 aa).

Positions 255 and 260 each coordinate Mn(2+). Lysine 267 is a catalytic residue. Mn(2+) is bound by residues aspartate 278, aspartate 337, and glutamate 339. Residue arginine 341 is part of the active site.

The protein belongs to the peptidase M17 family. The cofactor is Mn(2+).

The protein localises to the cytoplasm. The enzyme catalyses Release of an N-terminal amino acid, Xaa-|-Yaa-, in which Xaa is preferably Leu, but may be other amino acids including Pro although not Arg or Lys, and Yaa may be Pro. Amino acid amides and methyl esters are also readily hydrolyzed, but rates on arylamides are exceedingly low.. The catalysed reaction is Release of an N-terminal amino acid, preferentially leucine, but not glutamic or aspartic acids.. Its function is as follows. Presumably involved in the processing and regular turnover of intracellular proteins. Catalyzes the removal of unsubstituted N-terminal amino acids from various peptides. This Gluconobacter oxydans (strain 621H) (Gluconobacter suboxydans) protein is Probable cytosol aminopeptidase.